The sequence spans 313 residues: ADP-L-glycero-D-manno-heptose-6-epimerase (313 aa).

Residues 10–11, 31–32, lysine 38, arginine 53, 75–79, and asparagine 92 contribute to the NADP(+) site; these read MI, DN, and EGACS. Tyrosine 139 acts as the Proton acceptor in catalysis. Lysine 143 contacts NADP(+). A substrate-binding site is contributed by asparagine 174. NADP(+)-binding residues include valine 175 and lysine 183. The Proton acceptor role is filled by lysine 183. Substrate contacts are provided by residues serine 185, histidine 192, 206–209, arginine 214, and tyrosine 277; that span reads FAGS.

Belongs to the NAD(P)-dependent epimerase/dehydratase family. HldD subfamily. As to quaternary structure, homopentamer. Requires NADP(+) as cofactor.

The catalysed reaction is ADP-D-glycero-beta-D-manno-heptose = ADP-L-glycero-beta-D-manno-heptose. It participates in nucleotide-sugar biosynthesis; ADP-L-glycero-beta-D-manno-heptose biosynthesis; ADP-L-glycero-beta-D-manno-heptose from D-glycero-beta-D-manno-heptose 7-phosphate: step 4/4. Its pathway is bacterial outer membrane biogenesis; LPS core biosynthesis. Functionally, catalyzes the interconversion between ADP-D-glycero-beta-D-manno-heptose and ADP-L-glycero-beta-D-manno-heptose via an epimerization at carbon 6 of the heptose. The polypeptide is ADP-L-glycero-D-manno-heptose-6-epimerase (Vibrio vulnificus (strain CMCP6)).